A 410-amino-acid chain; its full sequence is NIPA-like protein 3 (410 aa).

Positions 1–24 (MDGAHSAGLQLQPLPPTSGATSTS) are disordered. 9 helical membrane passes run 37–57 (NLIGALLAIFGHLVVSIALNL), 80–100 (WWLGLLLLLLGELGVFASYAF), 105–125 (LIVPLSAVSVIASAIIGIIFI), 139–159 (VLSFVGCGLAIVGTYLLVTFA), 175–195 (LVSWPFLLYMLVAIVLFCLLL), 206–226 (IVVILLLVALLGSMTVVTVKA), 244–264 (PIFYVMFVCMVATAIYQATFL), 275–295 (LIASVGYILSTTAAITAGAIF), and 304–324 (ALHICMFALGCLIAFLGVFLI). The residue at position 376 (Ser376) is a Phosphoserine. Residues 389–410 (EEHSSRSTPGVPYRVLEHTKKE) are disordered.

It belongs to the NIPA family.

The protein resides in the membrane. This is NIPA-like protein 3 (Nipal3) from Mus musculus (Mouse).